Reading from the N-terminus, the 311-residue chain is Aspartate carbamoyltransferase catalytic subunit (311 aa).

Carbamoyl phosphate contacts are provided by R52 and T53. K80 contributes to the L-aspartate binding site. The carbamoyl phosphate site is built by R102, H131, and Q134. 2 residues coordinate L-aspartate: R164 and R216. A259 and P260 together coordinate carbamoyl phosphate.

The protein belongs to the aspartate/ornithine carbamoyltransferase superfamily. ATCase family. As to quaternary structure, heterododecamer (2C3:3R2) of six catalytic PyrB chains organized as two trimers (C3), and six regulatory PyrI chains organized as three dimers (R2).

It carries out the reaction carbamoyl phosphate + L-aspartate = N-carbamoyl-L-aspartate + phosphate + H(+). The protein operates within pyrimidine metabolism; UMP biosynthesis via de novo pathway; (S)-dihydroorotate from bicarbonate: step 2/3. In terms of biological role, catalyzes the condensation of carbamoyl phosphate and aspartate to form carbamoyl aspartate and inorganic phosphate, the committed step in the de novo pyrimidine nucleotide biosynthesis pathway. This Lactiplantibacillus plantarum (strain ATCC BAA-793 / NCIMB 8826 / WCFS1) (Lactobacillus plantarum) protein is Aspartate carbamoyltransferase catalytic subunit.